Consider the following 289-residue polypeptide: MKKKALLPLLLGIMVFLAGCDYSKPENRTGFFYNTFVKNMDNIIHWLGASFNNDYGLAIIVLVLAIRIIVLPFMLSNYKNSHMMREKMIIAKPDMDAVKEKVQRARTQEDKMAANQEMMEVYKKYDMNPMQSMLGCLPMLIQMPIIMGLFFVLKYPSPGGITEHSHFLWFNLAKPDIWITVIAGVLYFLQAYVSTFSMPPEQKQMSYMMMIISPIMIIWVSLSSAAALGLYWSVSAAFLIVQTYIANAYYSKKAKEEVAPMIAAYEKEHGGSGNSKGAKVVSKKNKKKK.

The N-terminal stretch at 1 to 19 (MKKKALLPLLLGIMVFLAG) is a signal peptide. Cys20 carries the N-palmitoyl cysteine lipid modification. Cys20 is lipidated: S-diacylglycerol cysteine. 5 helical membrane passes run 55–75 (YGLA…PFML), 133–153 (MLGC…FFVL), 177–197 (IWIT…STFS), 210–230 (MIIS…ALGL), and 231–251 (YWSV…AYYS). The disordered stretch occupies residues 268–289 (EHGGSGNSKGAKVVSKKNKKKK).

This sequence belongs to the OXA1/ALB3/YidC family. Type 2 subfamily.

The protein localises to the cell membrane. Functionally, required for the insertion and/or proper folding and/or complex formation of integral membrane proteins into the membrane. Involved in integration of membrane proteins that insert both dependently and independently of the Sec translocase complex, as well as at least some lipoproteins. The chain is Membrane protein insertase YidC from Staphylococcus carnosus (strain TM300).